The primary structure comprises 299 residues: Bifunctional protein FolD (299 aa).

NADP(+) contacts are provided by residues 169–171 (GRS), Ser-194, and Ile-235.

This sequence belongs to the tetrahydrofolate dehydrogenase/cyclohydrolase family. As to quaternary structure, homodimer.

It carries out the reaction (6R)-5,10-methylene-5,6,7,8-tetrahydrofolate + NADP(+) = (6R)-5,10-methenyltetrahydrofolate + NADPH. The enzyme catalyses (6R)-5,10-methenyltetrahydrofolate + H2O = (6R)-10-formyltetrahydrofolate + H(+). It functions in the pathway one-carbon metabolism; tetrahydrofolate interconversion. Its function is as follows. Catalyzes the oxidation of 5,10-methylenetetrahydrofolate to 5,10-methenyltetrahydrofolate and then the hydrolysis of 5,10-methenyltetrahydrofolate to 10-formyltetrahydrofolate. This chain is Bifunctional protein FolD, found in Trichormus variabilis (strain ATCC 29413 / PCC 7937) (Anabaena variabilis).